Here is a 428-residue protein sequence, read N- to C-terminus: BTB/POZ domain-containing protein KCTD16 (428 aa).

Residues 25–98 (EVVELNVGGQ…LRDRQVVLPD (74 aa)) form the BTB domain. A Phosphotyrosine modification is found at Tyr-112. A phosphoserine mark is found at Ser-130, Ser-137, Ser-143, and Ser-146.

As to quaternary structure, homopentamer; forms an open pentamer. In contrast to other BTB domain-containing proteins, does not interact with CUL3. Interacts as a tetramer with GABRB1 and GABRB2.

It localises to the presynaptic cell membrane. It is found in the postsynaptic cell membrane. Functionally, auxiliary subunit of GABA-B receptors that determine the pharmacology and kinetics of the receptor response. Increases agonist potency and markedly alter the G-protein signaling of the receptors by accelerating onset and promoting desensitization. The polypeptide is BTB/POZ domain-containing protein KCTD16 (KCTD16) (Homo sapiens (Human)).